Here is a 647-residue protein sequence, read N- to C-terminus: Threonine--tRNA ligase (647 aa).

A TGS domain is found at 1–61; sequence MINITFPDGA…TEDGSIEIVT (61 aa). Residues 242–540 are catalytic; sequence DHRKLGKELD…LIENYKGAFP (299 aa). Residues C336, H387, and H517 each contribute to the Zn(2+) site.

The protein belongs to the class-II aminoacyl-tRNA synthetase family. As to quaternary structure, homodimer. The cofactor is Zn(2+).

Its subcellular location is the cytoplasm. The enzyme catalyses tRNA(Thr) + L-threonine + ATP = L-threonyl-tRNA(Thr) + AMP + diphosphate + H(+). Catalyzes the attachment of threonine to tRNA(Thr) in a two-step reaction: L-threonine is first activated by ATP to form Thr-AMP and then transferred to the acceptor end of tRNA(Thr). Also edits incorrectly charged L-seryl-tRNA(Thr). This is Threonine--tRNA ligase from Streptococcus pneumoniae (strain JJA).